The primary structure comprises 379 residues: MIATEYPRPPLAGIDWNHLGFEPVEVNGHIESRFSPSTKTWSTPTFIPDPYIRIHGLTPALNYGQQIFEGLKAFRTPSGSITVFRPDQNAHRFARSARAVSIPPIPTDIFLEAVHLAVGMNSEFVPPVGTGAALYIRPLAFASSATVGLALASEFLFCVYVLPVAPLHKHSGENDKDRKKRGVRALVVEDFDRAAPRGTGDVKVGGNYGPALGRIDAARQEGYGLTLHLDSQSRSLVDEFSTSGFIGVRKENDDELKLVVSDSQQIVASVTIDSICEIARGFGWAVEKRSIAFTEVSEFVEVYAAGTAAMLVPVQSVERRSTGEFIQYSVDYAEPTSVFAQLYKALSGVQQGLVPDQWGWTQEVLRPKQLASQDTEADT.

Pyridoxal 5'-phosphate is bound at residue Arg-92. Lys-203 carries the post-translational modification N6-(pyridoxal phosphate)lysine. Position 239 (Glu-239) interacts with pyridoxal 5'-phosphate.

This sequence belongs to the class-IV pyridoxal-phosphate-dependent aminotransferase family. It depends on pyridoxal 5'-phosphate as a cofactor.

The protein operates within antifungal biosynthesis. Its function is as follows. Transaminase; part of the gene cluster that mediates the de novo generation of L-homotyrosine from acetyl-CoA and 4-hydroxyphenyl-pyruvate. L-homotyrosine is a building block of echinocandin B, a fungal lipidated cyclic hexapeptide that acts as an antifungal agent. L-homotyrosine 4-hydroxyphenyl-pyruvate first undergoes an aldol-type condensation by htyA with the C-2 of acetyl-CoA followed by the release of CoA to form 2-(4-hydroxybenzyl)-malate. This is followed by isomerization of 2-(4-hydroxy-benzyl)-malate to 3-(4-hydroxybenzyl)-malate by htyD. Thereafter, 3-(4-hydroxybenzyl)-malate undergoes decarboxylation and oxidation to form 2-oxo-4-(4-hydroxybenzyl)butanoic acid, coupled to reduction of NAD(+) to NADH by htyC. The product then undergoes transamination catalyzed by htyB to form L-homotyrosine. The polypeptide is Transaminase htyB (Aspergillus rugulosus (Emericella rugulosa)).